The chain runs to 262 residues: Small ribosomal subunit protein eS1 (262 aa).

This sequence belongs to the eukaryotic ribosomal protein eS1 family. Component of the small ribosomal subunit. Mature ribosomes consist of a small (40S) and a large (60S) subunit. The 40S subunit contains about 33 different proteins and 1 molecule of RNA (18S). The 60S subunit contains about 49 different proteins and 3 molecules of RNA (25S, 5.8S and 5S).

It is found in the cytoplasm. This Theileria annulata protein is Small ribosomal subunit protein eS1.